A 350-amino-acid polypeptide reads, in one-letter code: Flap endonuclease 1 (350 aa).

The segment at 1–102 (MGVNLKDLIP…KEIEKRRKIR (102 aa)) is N-domain. Residues Asp31, Asp84, Glu156, Glu158, Asp177, Asp179, and Asp240 each coordinate Mg(2+). The interval 120–262 (AARRYAMMSA…KALQLVKAYK (143 aa)) is I-domain. Positions 341–349 (KQLGLEAWF) are interaction with PCNA.

The protein belongs to the XPG/RAD2 endonuclease family. FEN1 subfamily. Interacts with PCNA. PCNA stimulates the nuclease activity without altering cleavage specificity. Mg(2+) serves as cofactor.

Structure-specific nuclease with 5'-flap endonuclease and 5'-3' exonuclease activities involved in DNA replication and repair. During DNA replication, cleaves the 5'-overhanging flap structure that is generated by displacement synthesis when DNA polymerase encounters the 5'-end of a downstream Okazaki fragment. Binds the unpaired 3'-DNA end and kinks the DNA to facilitate 5' cleavage specificity. Cleaves one nucleotide into the double-stranded DNA from the junction in flap DNA, leaving a nick for ligation. Also involved in the base excision repair (BER) pathway. Acts as a genome stabilization factor that prevents flaps from equilibrating into structures that lead to duplications and deletions. Also possesses 5'-3' exonuclease activity on nicked or gapped double-stranded DNA. In Staphylothermus marinus (strain ATCC 43588 / DSM 3639 / JCM 9404 / F1), this protein is Flap endonuclease 1.